Consider the following 220-residue polypeptide: Protein-methionine-sulfoxide reductase heme-binding subunit MsrQ (220 aa).

A run of 6 helical transmembrane segments spans residues 20 to 40 (LWLLYTAGFVPAVWTFYLGAT), 52 to 72 (EHLLGLWALRFLILTLLVTPI), 86 to 106 (ALGLLAFYYALMHFTTYMVLD), 122 to 142 (PFITIGMISLALLVPLALTSN), 153 to 173 (WSSLHKLVYIAIAGSAVHFLM), and 175 to 195 (VKSWPAEPVIYAAIVAALLLW).

The protein belongs to the MsrQ family. In terms of assembly, heterodimer of a catalytic subunit (MsrP) and a heme-binding subunit (MsrQ). It depends on FMN as a cofactor. Heme b is required as a cofactor.

It localises to the cell inner membrane. Part of the MsrPQ system that repairs oxidized periplasmic proteins containing methionine sulfoxide residues (Met-O), using respiratory chain electrons. Thus protects these proteins from oxidative-stress damage caused by reactive species of oxygen and chlorine generated by the host defense mechanisms. MsrPQ is essential for the maintenance of envelope integrity under bleach stress, rescuing a wide series of structurally unrelated periplasmic proteins from methionine oxidation. MsrQ provides electrons for reduction to the reductase catalytic subunit MsrP, using the quinone pool of the respiratory chain. This Brucella abortus (strain S19) protein is Protein-methionine-sulfoxide reductase heme-binding subunit MsrQ.